Consider the following 319-residue polypeptide: Pantothenate kinase (319 aa).

97–104 (GSVAVGKS) is an ATP binding site.

The protein belongs to the prokaryotic pantothenate kinase family.

It localises to the cytoplasm. The enzyme catalyses (R)-pantothenate + ATP = (R)-4'-phosphopantothenate + ADP + H(+). Its pathway is cofactor biosynthesis; coenzyme A biosynthesis; CoA from (R)-pantothenate: step 1/5. The sequence is that of Pantothenate kinase from Chelativorans sp. (strain BNC1).